We begin with the raw amino-acid sequence, 117 residues long: ATP-dependent Clp protease adapter protein ClpS 1 (117 aa).

A disordered region spans residues 1–33 (MIAMPVRMQQGSEGDGGGPSRGTSVITRTKPKT).

The protein belongs to the ClpS family. As to quaternary structure, binds to the N-terminal domain of the chaperone ClpA.

Involved in the modulation of the specificity of the ClpAP-mediated ATP-dependent protein degradation. This chain is ATP-dependent Clp protease adapter protein ClpS 1, found in Rhizobium meliloti (strain 1021) (Ensifer meliloti).